A 379-amino-acid chain; its full sequence is Putative clathrin assembly protein At1g68110 (379 aa).

The region spanning 26 to 158 (NSSYRNADLE…SFLSDQIHRL (133 aa)) is the ENTH domain.

The protein resides in the membrane. The protein localises to the clathrin-coated pit. It localises to the golgi apparatus. It is found in the cytoplasmic vesicle. Its subcellular location is the clathrin-coated vesicle. In Arabidopsis thaliana (Mouse-ear cress), this protein is Putative clathrin assembly protein At1g68110.